A 341-amino-acid polypeptide reads, in one-letter code: MAYKGQENLEHLNPRKVGVLITNLGTPDAPETGALRRYLREFLSDPRVVEIPRFIWFFILNLVILVIRPRKSAEAYKSVWTEEGSPLLVYSLAQGEGIRQRLQSKYGDDVVVRVAMRYGNPSIASQLQAFEDEGIRKLVVLPLYPQYSGSTNGSTFDAVAQDFMGRRLLPDLRFISHYPDYPPYIQAMAEHIRAYREKNGSADKLVFSFHGVPKRFLLKGDPYFHECHQTSQLLAKALGLSDGQWMTTFQSRFGAEEWLQPYTDATMKSLPGEGVKSVQVFCPGFSADCLETVEEIDQENREYFEEAGGESFAYISALNAEPAHLDALAQLVEDNLQGFLP.

Fe cation contacts are provided by histidine 210 and glutamate 291.

Belongs to the ferrochelatase family.

The protein localises to the cytoplasm. The catalysed reaction is heme b + 2 H(+) = protoporphyrin IX + Fe(2+). The protein operates within porphyrin-containing compound metabolism; protoheme biosynthesis; protoheme from protoporphyrin-IX: step 1/1. Its function is as follows. Catalyzes the ferrous insertion into protoporphyrin IX. The chain is Ferrochelatase from Alcanivorax borkumensis (strain ATCC 700651 / DSM 11573 / NCIMB 13689 / SK2).